The following is a 303-amino-acid chain: MNETNMIDEIKRLKKEKNAVILAHNYQIPEIQEIADIVGDSLKLSQEATKTDADIVVLSGVKFMAESVKILSPNKKVLLPAHDAGCPMADMIDVDQLKEFKAEYPNVPVVCYVNSSAEVKAESDICCTSSNAIKVVRSLQSDKVIFVPDQNLAAYIAEQVPEKEIIPWQGFCITHHRVKDLEVDKIRKQMPEAVFLVHPECTPDVVKKADFVGSTSQIIQYAKESNAEKFVIGTEMGVLHKLKKENPTKKFYLLSPGLICFNMKKTTLVNVYEALRDEQHEIIVDEYVREKALKTLNQMLEIK.

2 residues coordinate iminosuccinate: His-24 and Ser-41. Cys-86 serves as a coordination point for [4Fe-4S] cluster. Iminosuccinate-binding positions include 112–114 and Ser-129; that span reads YVN. Cys-172 is a binding site for [4Fe-4S] cluster. Iminosuccinate is bound by residues 198–200 and Thr-215; that span reads HPE. Cys-260 is a [4Fe-4S] cluster binding site.

The protein belongs to the quinolinate synthase family. Type 2 subfamily. It depends on [4Fe-4S] cluster as a cofactor.

The protein resides in the cytoplasm. It catalyses the reaction iminosuccinate + dihydroxyacetone phosphate = quinolinate + phosphate + 2 H2O + H(+). It participates in cofactor biosynthesis; NAD(+) biosynthesis; quinolinate from iminoaspartate: step 1/1. Its function is as follows. Catalyzes the condensation of iminoaspartate with dihydroxyacetone phosphate to form quinolinate. The chain is Quinolinate synthase from Alkaliphilus metalliredigens (strain QYMF).